A 538-amino-acid polypeptide reads, in one-letter code: Dihomomethionine N-hydroxylase (538 aa).

A helical transmembrane segment spans residues 8 to 28 (LPYPFHILLVFILSMASITLL).

It belongs to the cytochrome P450 family. It depends on heme as a cofactor. In terms of tissue distribution, highly expressed in cotyledons, leaves, stems and siliques. Detected in flowers and lateral roots, but not in the main root. Expressed only in the vascular bundles in apical plant parts.

The protein localises to the endoplasmic reticulum membrane. It carries out the reaction an L-polyhomomethionine + 2 reduced [NADPH--hemoprotein reductase] + 2 O2 = an (E)-omega-(methylsulfanyl)-alkanal oxime + 2 oxidized [NADPH--hemoprotein reductase] + CO2 + 3 H2O + 2 H(+). The enzyme catalyses L-dihomomethionine + 2 reduced [NADPH--hemoprotein reductase] + 2 O2 = (E)-5-(methylsulfanyl)pentanal oxime + 2 oxidized [NADPH--hemoprotein reductase] + CO2 + 3 H2O + 2 H(+). The catalysed reaction is L-trihomomethionine + 2 reduced [NADPH--hemoprotein reductase] + 2 O2 = (E)-6-(methylsulfanyl)hexanal oxime + 2 oxidized [NADPH--hemoprotein reductase] + CO2 + 3 H2O + 2 H(+). Its function is as follows. Catalyzes the conversion of the short chain elongated methionines di-, tri-, and tetrahomomethionine to their respective aldoximes 5-methylthiopentanaldoxime, 6-methylthiohexanaldoxime, and 7-methylheptanaldoxime. The sequence is that of Dihomomethionine N-hydroxylase (CYP79F1) from Arabidopsis thaliana (Mouse-ear cress).